A 197-amino-acid polypeptide reads, in one-letter code: MKIVIVALPGSGKTTILNFVKQKLPDVKIVNYGDVMLEIAKKRFGIQHRDEMRKKIPVDEYRKVQEEAAEYIASLTGDVIIDTHASIKIGGGYYPGLPDRIISKLKPDVILLLEYDPKVILERRKKDPDRFRDLESEEEIEMHQQANRYYAFAAANAGESTVHVLNFRGKPESRPFEHAEVAAEYIVNLILRTRQKS.

ATP is bound at residue 7-15; it reads ALPGSGKTT.

Belongs to the archaeal adenylate kinase family.

The protein localises to the cytoplasm. The catalysed reaction is AMP + ATP = 2 ADP. The sequence is that of Adenylate kinase (adkA) from Pyrobaculum aerophilum (strain ATCC 51768 / DSM 7523 / JCM 9630 / CIP 104966 / NBRC 100827 / IM2).